Here is a 524-residue protein sequence, read N- to C-terminus: CDC50-related protein CDC50.1 (524 aa).

Polar residues-rich tracts occupy residues 1–19 and 26–39; these read MGEN…SQFS and TLSS…QQSL. Disordered regions lie at residues 1 to 40 and 52 to 86; these read MGEN…QSLP and APSV…DAGS. Over 1-181 the chain is Cytoplasmic; that stretch reads MGENSTTGLR…GMYPLWSAGV (181 aa). Positions 67–80 are enriched in low complexity; that stretch reads GSSRLTSRGTSLSS. A helical membrane pass occupies residues 182-202; it reads VLRLCLLGALFFVSVGAWLIF. At 203 to 473 the chain is on the extracellular side; it reads EDEQHVECKL…VQKSRLGGRS (271 aa). Asparagine 297 and asparagine 339 each carry an N-linked (GlcNAc...) asparagine glycan. The chain crosses the membrane as a helical span at residues 474–494; that stretch reads LFIGIAYLSFGCLLTMLVFYM. Residues 495–524 lie on the Cytoplasmic side of the membrane; the sequence is LWKKWQYRREGEEIRDLRWQTKTRGSKKTK.

It belongs to the CDC50/LEM3 family. In terms of assembly, interacts with GC; the interaction regulates guanylate cyclase GC trafficking and sensing environmental changes.

The protein localises to the membrane. In tachyzoites, required for the cellular trafficking of guanylate cyclase GC and UGO to the cell membrane. May play a role in the folding of the GC P-type ATPase-like domain to sense vacuolar changes in phosphatidic acid and pH levels which trigger parasite egress. This is CDC50-related protein CDC50.1 from Toxoplasma gondii (strain ATCC 50853 / GT1).